The sequence spans 197 residues: Glycerol-3-phosphate acyltransferase (197 aa).

4 consecutive transmembrane segments (helical) span residues Met1–Val21, Pro78–Leu98, Val112–Ala132, and Val155–Trp175.

It belongs to the PlsY family. As to quaternary structure, probably interacts with PlsX.

The protein resides in the cell inner membrane. The catalysed reaction is an acyl phosphate + sn-glycerol 3-phosphate = a 1-acyl-sn-glycero-3-phosphate + phosphate. The protein operates within lipid metabolism; phospholipid metabolism. Functionally, catalyzes the transfer of an acyl group from acyl-phosphate (acyl-PO(4)) to glycerol-3-phosphate (G3P) to form lysophosphatidic acid (LPA). This enzyme utilizes acyl-phosphate as fatty acyl donor, but not acyl-CoA or acyl-ACP. The protein is Glycerol-3-phosphate acyltransferase of Aromatoleum aromaticum (strain DSM 19018 / LMG 30748 / EbN1) (Azoarcus sp. (strain EbN1)).